A 472-amino-acid chain; its full sequence is Protein translocase subunit SecD (472 aa).

6 consecutive transmembrane segments (helical) span residues 8–28, 300–320, 325–347, 353–375, 396–416, and 424–444; these read ILFTVIVFVFALLGLILPLSG, TIINAGIIGLIIVMIYMIIFY, VIADIALIYNTFLLMGILSWTGA, GIAGIILTFGTTVDGNIIIYERI, VFSTIFDANITTILAGLVLFF, and GFAVTLIIGVLGAMFTNLVVS.

The protein belongs to the SecD/SecF family. SecD subfamily. In terms of assembly, forms a complex with SecF. Part of the essential Sec protein translocation apparatus which comprises SecA, SecYEG and auxiliary proteins SecDF. Other proteins may also be involved.

The protein localises to the cell inner membrane. In terms of biological role, part of the Sec protein translocase complex. Interacts with the SecYEG preprotein conducting channel. SecDF uses the proton motive force (PMF) to complete protein translocation after the ATP-dependent function of SecA. The protein is Protein translocase subunit SecD of Petrotoga mobilis (strain DSM 10674 / SJ95).